Consider the following 284-residue polypeptide: Pseudouridine-5'-phosphate glycosidase (284 aa).

Glutamate 17 acts as the Proton donor in catalysis. Positions 77 and 97 each coordinate substrate. Aspartate 126 serves as a coordination point for Mn(2+). 128-130 contributes to the substrate binding site; the sequence is SQD. The active-site Nucleophile is the lysine 147.

It belongs to the pseudouridine-5'-phosphate glycosidase family. In terms of assembly, homotrimer. Requires Mn(2+) as cofactor.

The catalysed reaction is D-ribose 5-phosphate + uracil = psi-UMP + H2O. Functionally, catalyzes the reversible cleavage of pseudouridine 5'-phosphate (PsiMP) to ribose 5-phosphate and uracil. Functions biologically in the cleavage direction, as part of a pseudouridine degradation pathway. The chain is Pseudouridine-5'-phosphate glycosidase from Thermotoga petrophila (strain ATCC BAA-488 / DSM 13995 / JCM 10881 / RKU-1).